Here is a 101-residue protein sequence, read N- to C-terminus: Small ribosomal subunit protein uS14 (101 aa).

The protein belongs to the universal ribosomal protein uS14 family. Part of the 30S ribosomal subunit. Contacts proteins S3 and S10.

Binds 16S rRNA, required for the assembly of 30S particles and may also be responsible for determining the conformation of the 16S rRNA at the A site. The polypeptide is Small ribosomal subunit protein uS14 (Bordetella parapertussis (strain 12822 / ATCC BAA-587 / NCTC 13253)).